A 231-amino-acid chain; its full sequence is A-type ATP synthase subunit D (231 aa).

This sequence belongs to the V-ATPase D subunit family. As to quaternary structure, has multiple subunits with at least A(3), B(3), C, D, E, F, H, I and proteolipid K(x).

It localises to the cell membrane. In terms of biological role, component of the A-type ATP synthase that produces ATP from ADP in the presence of a proton gradient across the membrane. The chain is A-type ATP synthase subunit D from Methanobrevibacter smithii (strain ATCC 35061 / DSM 861 / OCM 144 / PS).